We begin with the raw amino-acid sequence, 137 residues long: Small ribosomal subunit protein bS6 (137 aa).

The segment at Val96–Glu137 is disordered. Over residues Lys104–Glu137 the composition is skewed to basic and acidic residues.

It belongs to the bacterial ribosomal protein bS6 family.

Functionally, binds together with bS18 to 16S ribosomal RNA. This chain is Small ribosomal subunit protein bS6, found in Vibrio atlanticus (strain LGP32) (Vibrio splendidus (strain Mel32)).